Here is a 157-residue protein sequence, read N- to C-terminus: Glutaredoxin-2, mitochondrial (157 aa).

The transit peptide at 1-19 directs the protein to the mitochondrion; sequence MSWYRAASVGRRLVASGRI. Residues 50–150 form the Glutaredoxin domain; it reads VNQIQETISN…PLVHQCYLNK (101 aa). [2Fe-2S] cluster is bound at residue Cys61. Lys67 contributes to the glutathione binding site. Position 70 is an S-glutathionyl cysteine; alternate (Cys70). Cys70 and Cys73 are oxidised to a cystine. Gln102 and Val114 together coordinate glutathione. [2Fe-2S] cluster is bound at residue Cys146.

Belongs to the glutaredoxin family. In terms of assembly, monomer; active form. Homodimer; inactive form. The homodimer is probably linked by 1 2Fe-2S cluster.

It is found in the mitochondrion. The protein resides in the nucleus. The 2Fe-2S present in the homodimer leads to inactivation of the enzyme. The 2Fe-2S may serve as a redox sensor: the presence of one-electron oxidants or reductants leading to the loss of the 2Fe-2S cluster, subsequent monomerization and activation of the enzyme. Glutathione-dependent oxidoreductase that facilitates the maintenance of mitochondrial redox homeostasis upon induction of apoptosis by oxidative stress. Involved in response to hydrogen peroxide and regulation of apoptosis caused by oxidative stress. Acts as a very efficient catalyst of monothiol reactions because of its high affinity for protein glutathione-mixed disulfides. Can receive electrons not only from glutathione (GSH), but also from thioredoxin reductase supporting both monothiol and dithiol reactions. Efficiently catalyzes both glutathionylation and deglutathionylation of mitochondrial complex I, which in turn regulates the superoxide production by the complex. Overexpression decreases the susceptibility to apoptosis and prevents loss of cardiolipin and cytochrome c release. In Rattus norvegicus (Rat), this protein is Glutaredoxin-2, mitochondrial (Glrx2).